We begin with the raw amino-acid sequence, 481 residues long: Uridine 5'-monophosphate synthase (481 aa).

Residues 1 to 214 are OPRTase; the sequence is MEVASQALGP…VFSAANHNGL (214 aa). Position 37 is a phosphotyrosine (Y37). The tract at residues 215-220 is domain linker; the sequence is PPPEKK. The interval 221-481 is OMPdecase; the sequence is ACKELSFGAR…EAYLSRLAVQ (261 aa). S257 is a binding site for orotidine 5'-phosphate. Residues S257, D259, and 281-283 each bind UMP; that span reads KTH. Residues K281, K314, D317, T321, S372, 430-432, and 450-451 each bind orotidine 5'-phosphate; these read QQY and GR. Catalysis depends on for OMPdecase activity residues K314 and D317. UMP is bound by residues D317, T321, S372, 430 to 432, and 450 to 451; these read QQY and GR.

It in the N-terminal section; belongs to the purine/pyrimidine phosphoribosyltransferase family. The protein in the C-terminal section; belongs to the OMP decarboxylase family. In terms of assembly, homodimer; dimerization is required for enzymatic activity.

It carries out the reaction orotidine 5'-phosphate + diphosphate = orotate + 5-phospho-alpha-D-ribose 1-diphosphate. It catalyses the reaction orotidine 5'-phosphate + H(+) = UMP + CO2. It participates in pyrimidine metabolism; UMP biosynthesis via de novo pathway; UMP from orotate: step 1/2. It functions in the pathway pyrimidine metabolism; UMP biosynthesis via de novo pathway; UMP from orotate: step 2/2. Bifunctional enzyme catalyzing the last two steps of de novo pyrimidine biosynthesis, orotate phosphoribosyltransferase (OPRT), which converts orotate to orotidine-5'-monophosphate (OMP), and orotidine-5'-monophosphate decarboxylase (ODC), the terminal enzymatic reaction that decarboxylates OMP to uridine monophosphate (UMP). The sequence is that of Uridine 5'-monophosphate synthase (Umps) from Mus musculus (Mouse).